Consider the following 399-residue polypeptide: Stearoyl-[acyl-carrier-protein] 9-desaturase, chloroplastic (399 aa).

Over residues 1–12 the composition is skewed to polar residues; that stretch reads MALNLNPVSTPF. The N-terminal 35 residues, 1–35, are a transit peptide targeting the chloroplast; sequence MALNLNPVSTPFQCRRLPSFSPRQTPSRRSPKFFM. The interval 1–57 is disordered; that stretch reads MALNLNPVSTPFQCRRLPSFSPRQTPSRRSPKFFMASTLSSSSPKEAESLKKPFSPP. Fe cation is bound by residues Glu-141, Glu-179, His-182, Glu-232, Glu-265, and His-268.

It belongs to the fatty acid desaturase type 2 family. As to quaternary structure, homodimer. It depends on Fe(2+) as a cofactor.

The protein localises to the plastid. It localises to the chloroplast. The enzyme catalyses octadecanoyl-[ACP] + 2 reduced [2Fe-2S]-[ferredoxin] + O2 + 2 H(+) = (9Z)-octadecenoyl-[ACP] + 2 oxidized [2Fe-2S]-[ferredoxin] + 2 H2O. The protein operates within lipid metabolism; fatty acid metabolism. Its function is as follows. Converts stearoyl-ACP to oleoyl-ACP by introduction of a cis double bond between carbons 9 and 10 of the acyl chain. The sequence is that of Stearoyl-[acyl-carrier-protein] 9-desaturase, chloroplastic from Spinacia oleracea (Spinach).